The chain runs to 208 residues: Uracil phosphoribosyltransferase (208 aa).

5-phospho-alpha-D-ribose 1-diphosphate contacts are provided by residues Arg-78, Arg-103, and 130-138 (DPMLATGGS). Uracil contacts are provided by residues Ile-193 and 198 to 200 (GDA). Asp-199 contacts 5-phospho-alpha-D-ribose 1-diphosphate.

This sequence belongs to the UPRTase family. The cofactor is Mg(2+).

It carries out the reaction UMP + diphosphate = 5-phospho-alpha-D-ribose 1-diphosphate + uracil. It participates in pyrimidine metabolism; UMP biosynthesis via salvage pathway; UMP from uracil: step 1/1. Allosterically activated by GTP. Its function is as follows. Catalyzes the conversion of uracil and 5-phospho-alpha-D-ribose 1-diphosphate (PRPP) to UMP and diphosphate. In Neisseria meningitidis serogroup B (strain ATCC BAA-335 / MC58), this protein is Uracil phosphoribosyltransferase.